The following is a 128-amino-acid chain: uncharacterized protein (128 aa).

Residues 95-123 are a coiled coil; it reads IIDFATAKRELDRLTEEIATLKGELAQDK.

It localises to the cellular thylakoid membrane. This is an uncharacterized protein from Synechocystis sp. (strain ATCC 27184 / PCC 6803 / Kazusa).